The sequence spans 394 residues: Na(+)/H(+) antiporter NhaA (394 aa).

Helical transmembrane passes span 14–34 (AGGLILIIAAAIALLMANSAL), 59–79 (LLLWINDGLMAVFFLVVGLEV), 95–115 (VFPAIAALGGMLAPALIYLLF), 125–145 (GWAIPAATDIAFALGVMALLG), 154–174 (VFLLALAIIDDLGVIIIIALF), 179–199 (VSLQSLGIAAAAIALLAYMNW), 213–233 (LVLWVCILKSGVHATLAGVIV), 254–274 (GLHPWVAYLILPLFAFANAGV), 292–312 (IATGLFIGKPLGIFTFSWLAV), 328–348 (IFAVSVLCGIGFTMSIFIASL), and 363–383 (LGILLGSTTAAVVGYSLLRLV).

This sequence belongs to the NhaA Na(+)/H(+) (TC 2.A.33) antiporter family.

Its subcellular location is the cell inner membrane. The enzyme catalyses Na(+)(in) + 2 H(+)(out) = Na(+)(out) + 2 H(+)(in). Functionally, na(+)/H(+) antiporter that extrudes sodium in exchange for external protons. This is Na(+)/H(+) antiporter NhaA from Yersinia pseudotuberculosis serotype O:1b (strain IP 31758).